We begin with the raw amino-acid sequence, 221 residues long: Small ribosomal subunit protein uS5 (221 aa).

In terms of domain architecture, S5 DRBM spans 46 to 109; it reads IKDEVIDIKR…INAKLNIMEI (64 aa).

The protein belongs to the universal ribosomal protein uS5 family. As to quaternary structure, part of the 30S ribosomal subunit. Contacts protein S4.

With S4 and S12 plays an important role in translational accuracy. The polypeptide is Small ribosomal subunit protein uS5 (Thermoplasma volcanium (strain ATCC 51530 / DSM 4299 / JCM 9571 / NBRC 15438 / GSS1)).